We begin with the raw amino-acid sequence, 247 residues long: Fasciclin-like arabinogalactan protein 13 (247 aa).

Residues 1-25 (MATTPLLLLLLTAVFLSTEITAQRA) form the signal peptide. Residues 34–179 (PINITAILEK…LAVYVVDMVL (146 aa)) enclose the FAS1 domain. 5 N-linked (GlcNAc...) asparagine glycosylation sites follow: Asn-36, Asn-55, Asn-68, Asn-141, and Asn-150. Residues 189-228 (KISPMAPPPKSKSPDVSDDSESSKKAAAPSESEKSGSGEM) form a disordered region. The GPI-anchor amidated glycine moiety is linked to residue Gly-224. A propeptide spans 225–247 (SGEMNTGLGLGLGLVVLCLKFLL) (removed in mature form).

This sequence belongs to the fasciclin-like AGP family.

It is found in the cell membrane. In terms of biological role, may be a cell surface adhesion protein. The polypeptide is Fasciclin-like arabinogalactan protein 13 (FLA13) (Arabidopsis thaliana (Mouse-ear cress)).